We begin with the raw amino-acid sequence, 996 residues long: NACHT, LRR and PYD domains-containing protein 9 (996 aa).

In terms of domain architecture, Pyrin spans 1–94; sequence MAESFFSDFG…WRKARNEIRQ (94 aa). One can recognise an NACHT domain in the interval 150–469; it reads PTVVLHGPEG…FYMFTRPKDP (320 aa). Position 156–163 (156–163) interacts with ATP; the sequence is GPEGIGKT. LRR repeat units lie at residues 748-769, 777-798, 805-825, 834-855, 862-883, and 891-914; these read KLNL…VLCE, ALEA…HLSQ, SLTF…TTLC, NLQE…DIAT, KLKT…QLCK, and KLEN…ASAL.

Belongs to the NLRP family. As to quaternary structure, sensor component of NLRP9 inflammasomes. Inflammasomes are supramolecular complexes that assemble in the cytosol in response to pathogens, such as rotavirus, and play critical roles in innate immunity and inflammation. The core of NLRP9 inflammasomes consists of a signal sensor component (NLRP9), an adapter (ASC/PYCARD), which recruits an effector pro-inflammatory caspase (CASP1). Within the complex, NLRP9 and PYCARD interact via their respective DAPIN/pyrin domains. This interaction initiates speck formation (nucleation) which greatly enhances further addition of soluble PYCARD molecules to the speck in a prion-like polymerization process. Clustered PYCARD nucleates the formation of CASP1 filaments through the interaction of their respective CARD domains, acting as a platform for CASP1 polymerization. CASP1 filament formation increases local enzyme concentration, resulting in trans-autocleavage and activation. Active CASP1 then processes IL1B and IL18 precursors, leading to the release of mature cytokines in the extracellular milieu and inflammatory response. Interacts with DHX9 upon rotavirus infection; this interaction may trigger inflammasome activation and inflammatory response. As to expression, detected exclusively in testis and ovary, and at high level in the oocyte from antral follicles.

The protein resides in the cytoplasm. It is found in the inflammasome. In terms of biological role, as the sensor component of the NLRP9 inflammasome, plays a crucial role in innate immunity and inflammation. In response to pathogens, including rotavirus, initiates the formation of the inflammasome polymeric complex, made of NLRP9, PYCARD and CASP1. Recruitment of proCASP1 to the inflammasome promotes its activation and CASP1-catalyzed IL1B and IL18 maturation and release in the extracellular milieu. The active cytokines stimulate inflammatory responses. Inflammasomes can also induce pyroptosis, an inflammatory form of programmed cell death. NLRP9 inflammasome activation may be initiated by DHX9 interaction with viral double-stranded RNA (dsRNA), preferentially to short dsRNA segments. This is NACHT, LRR and PYD domains-containing protein 9 (NLRP9) from Bos taurus (Bovine).